Here is a 299-residue protein sequence, read N- to C-terminus: ATP phosphoribosyltransferase (299 aa).

Belongs to the ATP phosphoribosyltransferase family. Long subfamily. The cofactor is Mg(2+).

It localises to the cytoplasm. It catalyses the reaction 1-(5-phospho-beta-D-ribosyl)-ATP + diphosphate = 5-phospho-alpha-D-ribose 1-diphosphate + ATP. The protein operates within amino-acid biosynthesis; L-histidine biosynthesis; L-histidine from 5-phospho-alpha-D-ribose 1-diphosphate: step 1/9. Feedback inhibited by histidine. Functionally, catalyzes the condensation of ATP and 5-phosphoribose 1-diphosphate to form N'-(5'-phosphoribosyl)-ATP (PR-ATP). Has a crucial role in the pathway because the rate of histidine biosynthesis seems to be controlled primarily by regulation of HisG enzymatic activity. The polypeptide is ATP phosphoribosyltransferase (Shewanella loihica (strain ATCC BAA-1088 / PV-4)).